Reading from the N-terminus, the 223-residue chain is Protein UGX2 (223 aa).

The span at 78 to 95 shows a compositional bias: basic residues; it reads SNKRAKMKSKTKLTRTAK. A disordered region spans residues 78-117; the sequence is SNKRAKMKSKTKLTRTAKQRRESPVCERDESDEDNDSDHY. The span at 96-105 shows a compositional bias: basic and acidic residues; sequence QRRESPVCER.

The chain is Protein UGX2 (UGX2) from Saccharomyces cerevisiae (strain ATCC 204508 / S288c) (Baker's yeast).